We begin with the raw amino-acid sequence, 1025 residues long: Multidrug resistance protein MdtC (1025 aa).

12 consecutive transmembrane segments (helical) span residues 3–23, 333–353, 360–380, 387–407, 431–451, 463–483, 528–548, 853–873, 875–895, 897–917, 953–973, and 984–1004; these read FFAL…AITL, EVEQ…FLFL, IIPA…MYLC, LSLM…IVVL, VGFT…PLLL, FAVT…TLTP, LVGV…ISIP, VILI…LYES, VHPL…LLAL, LFNA…IGIV, PIMM…LSGG, and ITIV…TPVV.

Belongs to the resistance-nodulation-cell division (RND) (TC 2.A.6) family. MdtC subfamily. As to quaternary structure, part of a tripartite efflux system composed of MdtA, MdtB and MdtC. MdtC forms a heteromultimer with MdtB.

The protein localises to the cell inner membrane. Functionally, the MdtABC tripartite complex confers resistance against novobiocin and deoxycholate. The chain is Multidrug resistance protein MdtC from Escherichia coli (strain 55989 / EAEC).